The sequence spans 774 residues: Shugoshin (774 aa).

Positions Ser-41–Leu-105 form a coiled coil. Disordered stretches follow at residues Gly-106 to Arg-151, Ser-205 to Leu-661, and Cys-676 to Leu-774. Residues Pro-109–Tyr-120 are compositionally biased toward basic and acidic residues. Residues Ala-214–Glu-224 show a composition bias toward acidic residues. Polar residues predominate over residues Gly-297–Glu-318. The segment covering Lys-382–Val-398 has biased composition (basic and acidic residues). Polar residues predominate over residues Glu-399–Phe-409. 2 stretches are compositionally biased toward basic and acidic residues: residues Asn-482 to Phe-495 and Phe-549 to Gln-558. Polar residues-rich tracts occupy residues Pro-595–Asn-604 and Gln-640–Thr-651. Residues Ala-706–Pro-722 are compositionally biased toward low complexity. A compositionally biased stretch (acidic residues) spans Leu-743–Gly-754. A compositionally biased stretch (basic residues) spans Arg-765–Leu-774.

It belongs to the shugoshin family.

It is found in the nucleus. The protein localises to the chromosome. Its subcellular location is the centromere. Its function is as follows. Plays a central role in chromosome cohesion during cell division by preventing premature dissociation of cohesin complex from centromeres after prophase, when most of cohesin complex dissociates from chromosomes arms. This is Shugoshin (sgo-1) from Neurospora crassa (strain ATCC 24698 / 74-OR23-1A / CBS 708.71 / DSM 1257 / FGSC 987).